Reading from the N-terminus, the 933-residue chain is MNMKKKEKHAIRKKSIGVASVLVGTLIGFGLLSSKEADASENSVTQSDSASNESKSNDSSSVSAAPKTDDTNVSDTKTSSNTNNGETSVAQNPAQQETTQSSSTNATTEETPVTGEATTTTTNQANTPATTQSSNTNAEELVNQTSNETTSNDTNTVSSVNSPQNSTNAENVSTTQDTSTEATPSNNESAPQSTDASNKDVVNQAVNTSAPRMRAFSLAAVAADAPAAGTDITNQLTNVTVGIDSGTTVYPHQAGYVKLNYGFSVPNSAVKGDTFKITVPKELNLNGVTSTAKVPPIMAGDQVLANGVIDSDGNVIYTFTDYVNTKDDVKATLTMPAYIDPENVKKTGNVTLATGIGSTTANKTVLVDYEKYGKFYNLSIKGTIDQIDKTNNTYRQTIYVNPSGDNVIAPVLTGNLKPNTDSNALIDQQNTSIKVYKVDNAADLSESYFVNPENFEDVTNSVNITFPNPNQYKVEFNTPDDQITTPYIVVVNGHIDPNSKGDLALRSTLYGYNSNIIWRSMSWDNEVAFNNGSGSGDGIDKPVVPEQPDEPGEIEPIPEDSDSDPGSDSGSDSNSDSGSDSGSDSTSDSGSDSASDSDSASDSDSASDSDSASDSDSASDSDSDNDSDSDSDSDSDSDSDSDSDSDSDSDSDSDSDSDSDSDSDSDSDSDSDSDSDSDSDSDSDSDSDSDSDSDSDSDSDSDSDSDSDSDSDSDSDSDSDSDSDSDSDSDSDSDSDSDSDSDSDSDSDSDSDSDSDSDSDSDSDSDSASDSDSDSDSDSDSDSDSDSDSDSDSDSDSDSDSDSDSDSESDSDSESDSDSDSDSDSDSDSDSDSDSDSASDSDSGSDSDSSSDSDSESDSNSDSESGSNNNVVPPNSPKNGTNASNKNEAKDSKEPLPDTGSEDEANTSLIWGLLASIGSLLLFRRKKENKDKK.

The signal sequence occupies residues 1–39; it reads MNMKKKEKHAIRKKSIGVASVLVGTLIGFGLLSSKEADA. Positions 9-20 match the YSIRK-G/S signaling motif motif; sequence HAIRKKSIGVAS. 2 disordered regions span residues 34 to 200 and 529 to 904; these read SKEA…SNKD and FNNG…SEDE. Residues 40 to 542 are ligand binding A region; sequence SENSVTQSDS…SGSGDGIDKP (503 aa). A compositionally biased stretch (low complexity) spans 47 to 65; that stretch reads SDSASNESKSNDSSSVSAA. A compositionally biased stretch (polar residues) spans 71–105; it reads TNVSDTKTSSNTNNGETSVAQNPAQQETTQSSSTN. 2 stretches are compositionally biased toward low complexity: residues 106–132 and 143–162; these read ATTE…ATTQ and NQTS…SVNS. Residues 163–200 are compositionally biased toward polar residues; it reads PQNSTNAENVSTTQDTSTEATPSNNESAPQSTDASNKD. Residues 547–565 are compositionally biased toward acidic residues; sequence QPDEPGEIEPIPEDSDSDP. Over residues 566–598 the composition is skewed to low complexity; that stretch reads GSDSGSDSNSDSGSDSGSDSTSDSGSDSASDSD. A compositionally biased stretch (acidic residues) spans 599–861; the sequence is SASDSDSASD…DSDSESDSNS (263 aa). Positions 862–880 are enriched in low complexity; that stretch reads DSESGSNNNVVPPNSPKNG. A compositionally biased stretch (basic and acidic residues) spans 887 to 896; it reads NEAKDSKEPL. Residues 896 to 900 carry the LPXTG sorting signal motif; that stretch reads LPDTG. A Pentaglycyl murein peptidoglycan amidated threonine modification is found at Thr-899. Residues 900-933 constitute a propeptide, removed by sortase; it reads GSEDEANTSLIWGLLASIGSLLLFRRKKENKDKK.

This sequence belongs to the serine-aspartate repeat-containing protein (SDr) family.

It is found in the secreted. Its subcellular location is the cell wall. Functionally, cell surface-associated protein implicated in virulence. Promotes bacterial attachment exclusively to the gamma-chain of human fibrinogen. Induces formation of bacterial clumps. This is Clumping factor A (clfA) from Staphylococcus aureus (strain COL).